A 508-amino-acid chain; its full sequence is Lysine--tRNA ligase (508 aa).

Residues glutamate 418 and glutamate 425 each coordinate Mg(2+).

Belongs to the class-II aminoacyl-tRNA synthetase family. Homodimer. Mg(2+) is required as a cofactor.

It is found in the cytoplasm. The catalysed reaction is tRNA(Lys) + L-lysine + ATP = L-lysyl-tRNA(Lys) + AMP + diphosphate. The polypeptide is Lysine--tRNA ligase (Burkholderia pseudomallei (strain 668)).